The sequence spans 131 residues: Probable calcium-binding protein CML34 (131 aa).

EF-hand domains are found at residues 1 to 33 (MSAKRVFEKFDKNKDGKLSLDEFREVALAFSPY), 34 to 69 (FTQEDIVKFFEEIDVDGNGELNADEFTSCIEKMLKE), 70 to 97 (VFVFCDVDGDGKIPASESYVTMTSLGKK), and 98 to 131 (FTEETSAEKVRAADVDGDGYLNFDEFMALVIGDI). Residues Asp11, Asn13, Asp15, Lys17, Glu22, Asp47, Asp49, Asn51, Glu53, and Glu58 each coordinate Ca(2+). Ca(2+) is bound by residues Asp111, Asp113, Asp115, Tyr117, and Glu122.

Functionally, potential calcium sensor. The sequence is that of Probable calcium-binding protein CML34 (CML34) from Arabidopsis thaliana (Mouse-ear cress).